We begin with the raw amino-acid sequence, 240 residues long: Ubiquinone biosynthesis O-methyltransferase (240 aa).

Arginine 36, glycine 66, aspartate 87, and methionine 129 together coordinate S-adenosyl-L-methionine.

The protein belongs to the methyltransferase superfamily. UbiG/COQ3 family.

It carries out the reaction a 3-demethylubiquinol + S-adenosyl-L-methionine = a ubiquinol + S-adenosyl-L-homocysteine + H(+). The enzyme catalyses a 3-(all-trans-polyprenyl)benzene-1,2-diol + S-adenosyl-L-methionine = a 2-methoxy-6-(all-trans-polyprenyl)phenol + S-adenosyl-L-homocysteine + H(+). It participates in cofactor biosynthesis; ubiquinone biosynthesis. Its function is as follows. O-methyltransferase that catalyzes the 2 O-methylation steps in the ubiquinone biosynthetic pathway. This chain is Ubiquinone biosynthesis O-methyltransferase, found in Pelagibacter ubique (strain HTCC1062).